A 161-amino-acid polypeptide reads, in one-letter code: Large ribosomal subunit protein bL21m (161 aa).

The N-terminal 35 residues, 1–35 (MLQLKFIWPVARITPIYRPFTSHPFRNLATSSSIS), are a transit peptide targeting the mitochondrion.

The protein belongs to the bacterial ribosomal protein bL21 family. In terms of assembly, component of the mitochondrial large ribosomal subunit (mt-LSU). Mature yeast 74S mitochondrial ribosomes consist of a small (37S) and a large (54S) subunit. The 37S small subunit contains a 15S ribosomal RNA (15S mt-rRNA) and 34 different proteins. The 54S large subunit contains a 21S rRNA (21S mt-rRNA) and 46 different proteins.

The protein resides in the mitochondrion. In terms of biological role, component of the mitochondrial ribosome (mitoribosome), a dedicated translation machinery responsible for the synthesis of mitochondrial genome-encoded proteins, including at least some of the essential transmembrane subunits of the mitochondrial respiratory chain. The mitoribosomes are attached to the mitochondrial inner membrane and translation products are cotranslationally integrated into the membrane. The sequence is that of Large ribosomal subunit protein bL21m (MRPL49) from Saccharomyces cerevisiae (strain ATCC 204508 / S288c) (Baker's yeast).